The primary structure comprises 307 residues: Aspartate carbamoyltransferase catalytic subunit (307 aa).

2 residues coordinate carbamoyl phosphate: Arg-58 and Thr-59. Lys-86 is a binding site for L-aspartate. Carbamoyl phosphate contacts are provided by Arg-108, His-136, and Gln-139. L-aspartate contacts are provided by Arg-169 and Arg-223. Positions 264 and 265 each coordinate carbamoyl phosphate.

This sequence belongs to the aspartate/ornithine carbamoyltransferase superfamily. ATCase family. As to quaternary structure, heterododecamer (2C3:3R2) of six catalytic PyrB chains organized as two trimers (C3), and six regulatory PyrI chains organized as three dimers (R2).

It carries out the reaction carbamoyl phosphate + L-aspartate = N-carbamoyl-L-aspartate + phosphate + H(+). The protein operates within pyrimidine metabolism; UMP biosynthesis via de novo pathway; (S)-dihydroorotate from bicarbonate: step 2/3. Functionally, catalyzes the condensation of carbamoyl phosphate and aspartate to form carbamoyl aspartate and inorganic phosphate, the committed step in the de novo pyrimidine nucleotide biosynthesis pathway. The polypeptide is Aspartate carbamoyltransferase catalytic subunit (Syntrophus aciditrophicus (strain SB)).